A 314-amino-acid chain; its full sequence is Deoxyhypusine hydroxylase (314 aa).

The residue at position 1 (Met-1) is an N-acetylmethionine. HEAT-like PBS-type repeat units follow at residues 61–87, 94–120, 188–214, 219–245, and 252–278; these read LAHE…VLND, VRHE…SLSS, ERYA…SLSA, LRHE…VLRD, and VRHE…FSKD. 4 residues coordinate Fe cation: His-63, Glu-64, His-96, and Glu-97. Residues His-221, Glu-222, His-254, and Glu-255 each coordinate Fe cation.

Belongs to the deoxyhypusine hydroxylase family. It depends on Fe(2+) as a cofactor.

The enzyme catalyses [eIF5A protein]-deoxyhypusine + AH2 + O2 = [eIF5A protein]-hypusine + A + H2O. Its pathway is protein modification; eIF5A hypusination. Functionally, catalyzes the hydroxylation of the N(6)-(4-aminobutyl)-L-lysine intermediate to form hypusine, an essential post-translational modification only found in mature eIF-5A factor. The protein is Deoxyhypusine hydroxylase of Arabidopsis thaliana (Mouse-ear cress).